A 177-amino-acid polypeptide reads, in one-letter code: Large ribosomal subunit protein uL6 (177 aa).

Belongs to the universal ribosomal protein uL6 family. As to quaternary structure, part of the 50S ribosomal subunit.

Functionally, this protein binds to the 23S rRNA, and is important in its secondary structure. It is located near the subunit interface in the base of the L7/L12 stalk, and near the tRNA binding site of the peptidyltransferase center. The chain is Large ribosomal subunit protein uL6 from Pseudomonas putida (strain ATCC 700007 / DSM 6899 / JCM 31910 / BCRC 17059 / LMG 24140 / F1).